We begin with the raw amino-acid sequence, 109 residues long: uncharacterized protein (109 aa).

A helical transmembrane segment spans residues tyrosine 78–isoleucine 98.

The protein resides in the membrane. This is an uncharacterized protein from Saccharomyces cerevisiae (strain ATCC 204508 / S288c) (Baker's yeast).